The primary structure comprises 142 residues: Small ribosomal subunit protein uS12 (142 aa).

The disordered stretch occupies residues 1 to 44 (MANGKYAARKLKQDRQKHRWSDSDYARRARGLGKKSDPLEGAPQ). The segment covering 11–27 (LKQDRQKHRWSDSDYAR) has biased composition (basic and acidic residues).

The protein belongs to the universal ribosomal protein uS12 family. In terms of assembly, part of the 30S ribosomal subunit.

With S4 and S5 plays an important role in translational accuracy. Located at the interface of the 30S and 50S subunits. The protein is Small ribosomal subunit protein uS12 of Natronomonas pharaonis (strain ATCC 35678 / DSM 2160 / CIP 103997 / JCM 8858 / NBRC 14720 / NCIMB 2260 / Gabara) (Halobacterium pharaonis).